The sequence spans 208 residues: Small ribosomal subunit protein uS4 (208 aa).

One can recognise an S4 RNA-binding domain in the interval Arg98–Lys163.

The protein belongs to the universal ribosomal protein uS4 family. As to quaternary structure, part of the 30S ribosomal subunit. Contacts protein S5. The interaction surface between S4 and S5 is involved in control of translational fidelity.

Functionally, one of the primary rRNA binding proteins, it binds directly to 16S rRNA where it nucleates assembly of the body of the 30S subunit. Its function is as follows. With S5 and S12 plays an important role in translational accuracy. The polypeptide is Small ribosomal subunit protein uS4 (Caldicellulosiruptor saccharolyticus (strain ATCC 43494 / DSM 8903 / Tp8T 6331)).